Here is a 299-residue protein sequence, read N- to C-terminus: 4-diphosphocytidyl-2-C-methyl-D-erythritol kinase (299 aa).

The active site involves Lys16. 101-111 lines the ATP pocket; that stretch reads PVAAGIGGGSA. Asp143 is a catalytic residue.

This sequence belongs to the GHMP kinase family. IspE subfamily.

It carries out the reaction 4-CDP-2-C-methyl-D-erythritol + ATP = 4-CDP-2-C-methyl-D-erythritol 2-phosphate + ADP + H(+). It participates in isoprenoid biosynthesis; isopentenyl diphosphate biosynthesis via DXP pathway; isopentenyl diphosphate from 1-deoxy-D-xylulose 5-phosphate: step 3/6. In terms of biological role, catalyzes the phosphorylation of the position 2 hydroxy group of 4-diphosphocytidyl-2C-methyl-D-erythritol. This is 4-diphosphocytidyl-2-C-methyl-D-erythritol kinase from Rhodopseudomonas palustris (strain ATCC BAA-98 / CGA009).